The primary structure comprises 411 residues: Branched-chain-amino-acid aminotransferase, cytosolic (411 aa).

K247 is subject to N6-(pyridoxal phosphate)lysine.

This sequence belongs to the class-IV pyridoxal-phosphate-dependent aminotransferase family. Homodimer. It depends on pyridoxal 5'-phosphate as a cofactor. Post-translationally, the N-terminus is blocked. In terms of tissue distribution, brain, low expression in ovary and placenta, but not found in liver, kidney, and skeletal muscle.

It is found in the cytoplasm. The enzyme catalyses L-leucine + 2-oxoglutarate = 4-methyl-2-oxopentanoate + L-glutamate. It carries out the reaction L-isoleucine + 2-oxoglutarate = (S)-3-methyl-2-oxopentanoate + L-glutamate. It catalyses the reaction L-valine + 2-oxoglutarate = 3-methyl-2-oxobutanoate + L-glutamate. Catalyzes the first reaction in the catabolism of the essential branched chain amino acids leucine, isoleucine, and valine. The chain is Branched-chain-amino-acid aminotransferase, cytosolic (Bcat1) from Rattus norvegicus (Rat).